The chain runs to 813 residues: Serine/threonine-protein kinase kin-29 (813 aa).

Residues 18–269 (YDVGRAIGKG…IQNVLAHRWM (252 aa)) form the Protein kinase domain. ATP contacts are provided by residues 24-32 (IGKGNFATV) and K47. D140 (proton acceptor) is an active-site residue. A disordered region spans residues 383 to 412 (LSSPDCDSDDSSNSDLCDESPLSSLEPNHK). Acidic residues predominate over residues 388 to 400 (CDSDDSSNSDLCD).

This sequence belongs to the protein kinase superfamily. CAMK Ser/Thr protein kinase family. SNF1 subfamily. As to quaternary structure, interacts with tax-6. Mg(2+) is required as a cofactor. Autophosphorylated. Elevated cAMP levels appears to act via PKA to directly or indirectly phosphorylate multiple sites on kin-29 and inhibit function.

The protein resides in the cytoplasm. Its subcellular location is the nucleus. It catalyses the reaction L-seryl-[protein] + ATP = O-phospho-L-seryl-[protein] + ADP + H(+). The catalysed reaction is L-threonyl-[protein] + ATP = O-phospho-L-threonyl-[protein] + ADP + H(+). Its function is as follows. Regulates chemoreceptor expression by phosphorylating the hda-4 class II histone deacetylase (HDAC) and inhibiting the gene repression functions of hda-4 and the mef-2 transcription factor, enabling the correct sensing and transduction of food signals. Role in determining body size, the dauer decision and serotonin-mediated egg laying. May modulate the Sma/Mab pathway and regulates development in the later larval stages. The sequence is that of Serine/threonine-protein kinase kin-29 from Caenorhabditis briggsae.